A 225-amino-acid chain; its full sequence is Uridylate kinase (225 aa).

Gly9–Ser10 lines the ATP pocket. Gly46 provides a ligand contact to UMP. Gly47 and Arg51 together coordinate ATP. Residues Asp67 and Thr115–Thr121 contribute to the UMP site. Thr141, Asn142, Tyr147, and Asp150 together coordinate ATP.

The protein belongs to the UMP kinase family. As to quaternary structure, homohexamer.

Its subcellular location is the cytoplasm. It carries out the reaction UMP + ATP = UDP + ADP. The protein operates within pyrimidine metabolism; CTP biosynthesis via de novo pathway; UDP from UMP (UMPK route): step 1/1. Its activity is regulated as follows. Inhibited by UTP. In terms of biological role, catalyzes the reversible phosphorylation of UMP to UDP. The protein is Uridylate kinase of Methanococcus aeolicus (strain ATCC BAA-1280 / DSM 17508 / OCM 812 / Nankai-3).